Consider the following 476-residue polypeptide: Ribulose bisphosphate carboxylase large chain (476 aa).

Residues 1–2 constitute a propeptide that is removed on maturation; it reads MS. Pro-3 is modified (N-acetylproline). Lys-14 is subject to N6,N6,N6-trimethyllysine. Substrate is bound by residues Asn-123 and Thr-173. The active-site Proton acceptor is the Lys-175. Lys-177 is a binding site for substrate. Mg(2+)-binding residues include Lys-201, Asp-203, and Glu-204. At Lys-201 the chain carries N6-carboxylysine. His-294 functions as the Proton acceptor in the catalytic mechanism. Residues Arg-295, His-327, and Ser-379 each coordinate substrate.

This sequence belongs to the RuBisCO large chain family. Type I subfamily. Heterohexadecamer of 8 large chains and 8 small chains; disulfide-linked. The disulfide link is formed within the large subunit homodimers. It depends on Mg(2+) as a cofactor. The disulfide bond which can form in the large chain dimeric partners within the hexadecamer appears to be associated with oxidative stress and protein turnover.

It localises to the plastid. The protein localises to the chloroplast. It catalyses the reaction 2 (2R)-3-phosphoglycerate + 2 H(+) = D-ribulose 1,5-bisphosphate + CO2 + H2O. It carries out the reaction D-ribulose 1,5-bisphosphate + O2 = 2-phosphoglycolate + (2R)-3-phosphoglycerate + 2 H(+). In terms of biological role, ruBisCO catalyzes two reactions: the carboxylation of D-ribulose 1,5-bisphosphate, the primary event in carbon dioxide fixation, as well as the oxidative fragmentation of the pentose substrate in the photorespiration process. Both reactions occur simultaneously and in competition at the same active site. This is Ribulose bisphosphate carboxylase large chain from Arenaria drummondii (Drummond sandwort).